The sequence spans 325 residues: GMP reductase (325 aa).

The Thioimidate intermediate role is filled by cysteine 174. 203 to 226 (IIADGGLRTHGDIAKSIRFGATMV) is an NADP(+) binding site.

Belongs to the IMPDH/GMPR family. GuaC type 2 subfamily.

The enzyme catalyses IMP + NH4(+) + NADP(+) = GMP + NADPH + 2 H(+). Its function is as follows. Catalyzes the irreversible NADPH-dependent deamination of GMP to IMP. It functions in the conversion of nucleobase, nucleoside and nucleotide derivatives of G to A nucleotides, and in maintaining the intracellular balance of A and G nucleotides. This chain is GMP reductase, found in Staphylococcus epidermidis (strain ATCC 35984 / DSM 28319 / BCRC 17069 / CCUG 31568 / BM 3577 / RP62A).